A 210-amino-acid polypeptide reads, in one-letter code: Probable molybdenum cofactor guanylyltransferase (210 aa).

GTP contacts are provided by residues 18–20 (LAG), Lys-31, Asn-59, Asp-86, and Asp-111. Asp-111 contributes to the Mg(2+) binding site.

It belongs to the MobA family. Mg(2+) serves as cofactor.

The protein resides in the cytoplasm. It carries out the reaction Mo-molybdopterin + GTP + H(+) = Mo-molybdopterin guanine dinucleotide + diphosphate. Transfers a GMP moiety from GTP to Mo-molybdopterin (Mo-MPT) cofactor (Moco or molybdenum cofactor) to form Mo-molybdopterin guanine dinucleotide (Mo-MGD) cofactor. The polypeptide is Probable molybdenum cofactor guanylyltransferase (nasC) (Haloferax mediterranei (strain ATCC 33500 / DSM 1411 / JCM 8866 / NBRC 14739 / NCIMB 2177 / R-4) (Halobacterium mediterranei)).